A 157-amino-acid chain; its full sequence is NudC domain-containing protein 2 (157 aa).

Position 2 is an N-acetylserine (serine 2). The 91-residue stretch at 14–104 folds into the CS domain; the sequence is CATPWGQWYQ…DAANCWTSLL (91 aa). A disordered region spans residues 134-157; it reads FDFSGAEISGNYTKGGPDFSNLEK. Serine 142 is subject to Phosphoserine. The residue at position 145 (tyrosine 145) is a Phosphotyrosine.

In terms of assembly, interacts with LIS1.

It localises to the chromosome. Its subcellular location is the centromere. The protein localises to the kinetochore. The protein resides in the cytoplasm. It is found in the cytoskeleton. It localises to the microtubule organizing center. Its subcellular location is the centrosome. The protein localises to the spindle pole. Functionally, may regulate the LIS1/dynein pathway by stabilizing LIS1 with Hsp90 chaperone. The chain is NudC domain-containing protein 2 (Nudcd2) from Rattus norvegicus (Rat).